Consider the following 76-residue polypeptide: Conotoxin VnMKLT2-013 (76 aa).

Positions 1 to 23 (MMKLTCVLIIAVLFLTACQLTTA) are cleaved as a signal peptide. Positions 24–42 (ETRDEYRAVRSSDEVQNSR) are excised as a propeptide. The disordered stretch occupies residues 29 to 49 (YRAVRSSDEVQNSRSTDDCST). 3 disulfide bridges follow: Cys47–Cys58, Cys52–Cys63, and Cys57–Cys72.

This sequence belongs to the conotoxin O1 superfamily. As to expression, expressed by the venom duct.

It is found in the secreted. In Conus ventricosus (Mediterranean cone), this protein is Conotoxin VnMKLT2-013.